We begin with the raw amino-acid sequence, 86 residues long: Weak neurotoxin 9 (86 aa).

The signal sequence occupies residues 1–21 (MKTLLLTLVVVTIVCLDLGYT). 5 disulfide bridges follow: C24–C45, C27–C32, C38–C63, C67–C78, and C79–C84.

Belongs to the three-finger toxin family. Ancestral subfamily. Orphan group II sub-subfamily. As to expression, expressed by the venom gland.

The protein localises to the secreted. Its function is as follows. Binds with low affinity to muscular (alpha-1-beta-1-delta-epsilon/CHRNA1-CHRNB1-CHRND-CHRNE) and very low affinity to neuronal (alpha-7/CHRNA7) nicotinic acetylcholine receptor (nAChR). The polypeptide is Weak neurotoxin 9 (Naja sputatrix (Malayan spitting cobra)).